The chain runs to 534 residues: MSKEASQDSRSITPVEAVEPLEVVDAEKNVTTSPYNGSGTVEDPFIVEFQQDDKSNPMNWGQFRKWFLTSIVTFSVFAVTFTSSAYSVSAEEIMTEFDISSTLFITGVSVFVLGFAIGPAVWGPLVTPHDERSNANRASLQSTRSELYGRQMPWIASHTAMVAFMAGSAGSPNIATLIVLRFLAGTFGGSPLVNSGGAIADLFPPAQRGLAMTIYCVAPFLGPILGPIVGGFATEYIGWRWVQGMCTIFIGVIGIIGVIFVPETYGPVLLQRKANALSKADGKVYISVLQKNQGKKQPSEVFGRALIRPWVLLFREPIVLIASLYMAIIYGTVYMFLGAMPIVYNELRGWSPGFGGLAFLGMMVGIIIGLGYAIWDNNGRYMKLDPSKRTAESRLPPAIAGAVALPIGMFAFAWTNYPSIHWAVSIVLSAPFGFGVVLVILPIVNYLIDSYTVYAASVLAAAAVFRSIMGAVFPLFTSQMYHNLGIHWATSIPAFLTLVCMPFPFFMYRYGAVVREKCKYAAEAAQIMKKMQGR.

Asparagine 29 and asparagine 36 each carry an N-linked (GlcNAc...) asparagine glycan. The next 12 membrane-spanning stretches (helical) occupy residues 66 to 86 (WFLT…SSAY), 103 to 123 (LFIT…AVWG), 160 to 180 (AMVA…LIVL), 182 to 202 (FLAG…IADL), 209 to 229 (GLAM…GPIV), 241 to 261 (WVQG…VIFV), 318 to 338 (IVLI…MFLG), 354 to 374 (FGGL…GYAI), 395 to 415 (LPPA…FAWT), 424 to 444 (VSIV…LPIV), 456 to 476 (ASVL…FPLF), and 486 to 506 (IHWA…FPFF).

This sequence belongs to the major facilitator superfamily. Sugar transporter (TC 2.A.1.1) family.

Its subcellular location is the membrane. Major facilitator-type transporter; part of the gene cluster that mediates the biosynthesis of sorbicillinoids, a diverse group of yellow secondary metabolites that restrict growth of competing pathogenic fungi but not of bacteria. The sequence is that of Major facilitator-type transporter sor6 from Hypocrea jecorina (strain QM6a) (Trichoderma reesei).